A 299-amino-acid chain; its full sequence is MTTVIDGKNVAASVIQTVKSATAALEKSSGVTTGLAVVIVGDDPASHAYVGSKGRMAKECGFKSVQHTLPADTKQEDLAALVAALNADPSIHGILVQLPLPKPLDSEAIIQSILPEKDVDGLSVVNAGKLATGDLKTGLVSCTPAGAMVFVRRTHGEDLSGLNAVVIGRSNLFGKPMAQLLLNANATVTIAHSRTKNLAEVCRNADILVAAVGRPEMVRADWVKPGATVIDVGINRVAAPETGEGKTRLVGDVAFEEVSAVASTITPVPGGVGPMTIAMLMANTVIAAHRTAGQTPPQF.

NADP(+) is bound by residues 168–170 (GRS), Ser-193, and Ile-234.

This sequence belongs to the tetrahydrofolate dehydrogenase/cyclohydrolase family. In terms of assembly, homodimer.

The enzyme catalyses (6R)-5,10-methylene-5,6,7,8-tetrahydrofolate + NADP(+) = (6R)-5,10-methenyltetrahydrofolate + NADPH. It carries out the reaction (6R)-5,10-methenyltetrahydrofolate + H2O = (6R)-10-formyltetrahydrofolate + H(+). Its pathway is one-carbon metabolism; tetrahydrofolate interconversion. In terms of biological role, catalyzes the oxidation of 5,10-methylenetetrahydrofolate to 5,10-methenyltetrahydrofolate and then the hydrolysis of 5,10-methenyltetrahydrofolate to 10-formyltetrahydrofolate. This is Bifunctional protein FolD from Rhizobium johnstonii (strain DSM 114642 / LMG 32736 / 3841) (Rhizobium leguminosarum bv. viciae).